A 284-amino-acid chain; its full sequence is Tropomyosin-1 (284 aa).

A coiled-coil region spans residues 1-284; it reads MDAIKKKMLA…DSTFAELAGY (284 aa). The segment at 103–131 is disordered; it reads EERLQSATEKLEEASKAADESERGRKVLE.

This sequence belongs to the tropomyosin family. In terms of assembly, homodimer.

Its function is as follows. Tropomyosin, in association with the troponin complex, plays a central role in the calcium dependent regulation of muscle contraction. This is Tropomyosin-1 from Biomphalaria glabrata (Bloodfluke planorb).